We begin with the raw amino-acid sequence, 40 residues long: Large ribosomal subunit protein bL36B (40 aa).

It belongs to the bacterial ribosomal protein bL36 family.

The chain is Large ribosomal subunit protein bL36B from Clavibacter michiganensis subsp. michiganensis (strain NCPPB 382).